The following is an 88-amino-acid chain: YcgL domain-containing protein CGSHiGG_01115 (88 aa).

Positions 1-85 constitute a YcgL domain; it reads MLCAIYKSKK…QDDGLFNSLS (85 aa).

This is YcgL domain-containing protein CGSHiGG_01115 from Haemophilus influenzae (strain PittGG).